A 53-amino-acid chain; its full sequence is Large ribosomal subunit protein eL40 (53 aa).

It belongs to the eukaryotic ribosomal protein eL40 family.

In Staphylothermus marinus (strain ATCC 43588 / DSM 3639 / JCM 9404 / F1), this protein is Large ribosomal subunit protein eL40.